A 144-amino-acid chain; its full sequence is Large ribosomal subunit protein uL13 (144 aa).

It belongs to the universal ribosomal protein uL13 family. In terms of assembly, part of the 50S ribosomal subunit.

Functionally, this protein is one of the early assembly proteins of the 50S ribosomal subunit, although it is not seen to bind rRNA by itself. It is important during the early stages of 50S assembly. The protein is Large ribosomal subunit protein uL13 of Nitratidesulfovibrio vulgaris (strain ATCC 29579 / DSM 644 / CCUG 34227 / NCIMB 8303 / VKM B-1760 / Hildenborough) (Desulfovibrio vulgaris).